The chain runs to 328 residues: Phosphate acyltransferase (328 aa).

It belongs to the PlsX family. As to quaternary structure, homodimer. Probably interacts with PlsY.

The protein localises to the cytoplasm. The enzyme catalyses a fatty acyl-[ACP] + phosphate = an acyl phosphate + holo-[ACP]. Its pathway is lipid metabolism; phospholipid metabolism. Catalyzes the reversible formation of acyl-phosphate (acyl-PO(4)) from acyl-[acyl-carrier-protein] (acyl-ACP). This enzyme utilizes acyl-ACP as fatty acyl donor, but not acyl-CoA. The protein is Phosphate acyltransferase of Campylobacter jejuni (strain RM1221).